Consider the following 469-residue polypeptide: MDETVSMKCGLEIHVQVDTNSKLFCTCPTNYNEVEPNTNICPVCMAHPGARPMPPNKKAVDMAIMVAKMLGCEIVLDKDIYFQRKHYNYPDLPSGYQRTSVPVGEHGKFLGVGITEVHLEEDPGQYKPDLGVVDYNRSGTPLIEIVSDPDIKSPEEAKEFLRQLLRLFNYIGNLRGEGSMRADVNISVNYNGVQGNRVEVKNVNSIKGVYKVLKYEFIRQKNILRRGGEIKRETRAFMEAQLITKAMRSKETADDYRHIPDPDLQPIVINKEWVKTVEEKMPETPMDKEKRFVEQYGIKLEDAKVMVADLALADVFETVVSELGKEKENISLAVIWIRNELRRVLAYNNIDFLESRLKPEHITELIQLITGKTISQKIGKKVIEIMVENKGEKTPKQIIKELGLTVIDSEAVLETACKEAIENNPKAVDDYLTGNEGALNFVVGQVMRATRGRAQPNKVVEILKKLINK.

It belongs to the GatB/GatE family. GatB subfamily. Heterotrimer of A, B and C subunits.

It carries out the reaction L-glutamyl-tRNA(Gln) + L-glutamine + ATP + H2O = L-glutaminyl-tRNA(Gln) + L-glutamate + ADP + phosphate + H(+). The enzyme catalyses L-aspartyl-tRNA(Asn) + L-glutamine + ATP + H2O = L-asparaginyl-tRNA(Asn) + L-glutamate + ADP + phosphate + 2 H(+). Its function is as follows. Allows the formation of correctly charged Asn-tRNA(Asn) or Gln-tRNA(Gln) through the transamidation of misacylated Asp-tRNA(Asn) or Glu-tRNA(Gln) in organisms which lack either or both of asparaginyl-tRNA or glutaminyl-tRNA synthetases. The reaction takes place in the presence of glutamine and ATP through an activated phospho-Asp-tRNA(Asn) or phospho-Glu-tRNA(Gln). In Methanococcus aeolicus (strain ATCC BAA-1280 / DSM 17508 / OCM 812 / Nankai-3), this protein is Aspartyl/glutamyl-tRNA(Asn/Gln) amidotransferase subunit B.